Consider the following 465-residue polypeptide: SHC-transforming protein 1 (465 aa).

The region spanning 44-227 (MGPGVPYLVR…AGFDGSAWDE (184 aa)) is the PID domain. The segment at 228–369 (EEEELPDHAY…SMEDQLKREP (142 aa)) is CH1. Residues 281–315 (VSGAEQDSRKMQPTLQGRERFPVPCSRPPNRPDLF) are disordered. One can recognise an SH2 domain in the interval 370–461 (WYQGKMSRKE…GSELCLQQPV (92 aa)).

As to quaternary structure, interacts with grb2. Highly expressed in oocytes and embryo. Also expressed in liver. Detected in ovary, testis and heart and to a lesser extent in liver (at protein level).

It localises to the cytoplasm. Its function is as follows. Implicated in ras-dependent oocyte maturation induced by insulin/IGF1. The sequence is that of SHC-transforming protein 1 (shc1) from Xenopus laevis (African clawed frog).